A 142-amino-acid polypeptide reads, in one-letter code: Putative pre-16S rRNA nuclease (142 aa).

This sequence belongs to the YqgF nuclease family.

Its subcellular location is the cytoplasm. In terms of biological role, could be a nuclease involved in processing of the 5'-end of pre-16S rRNA. The chain is Putative pre-16S rRNA nuclease from Azotobacter vinelandii (strain DJ / ATCC BAA-1303).